A 419-amino-acid polypeptide reads, in one-letter code: L-rhamnose isomerase (419 aa).

3 residues coordinate Mn(2+): histidine 262, aspartate 294, and aspartate 296.

Belongs to the rhamnose isomerase family. As to quaternary structure, homotetramer. Mn(2+) serves as cofactor.

Its subcellular location is the cytoplasm. The enzyme catalyses L-rhamnopyranose = L-rhamnulose. It functions in the pathway carbohydrate degradation; L-rhamnose degradation; glycerone phosphate from L-rhamnose: step 1/3. Catalyzes the interconversion of L-rhamnose and L-rhamnulose. This Enterobacter sp. (strain 638) protein is L-rhamnose isomerase.